A 137-amino-acid polypeptide reads, in one-letter code: Nucleoside diphosphate kinase (137 aa).

Lysine 10, phenylalanine 58, arginine 86, threonine 92, arginine 103, and asparagine 113 together coordinate ATP. The Pros-phosphohistidine intermediate role is filled by histidine 116.

The protein belongs to the NDK family. In terms of assembly, homotetramer. Requires Mg(2+) as cofactor.

The protein resides in the cytoplasm. It carries out the reaction a 2'-deoxyribonucleoside 5'-diphosphate + ATP = a 2'-deoxyribonucleoside 5'-triphosphate + ADP. The enzyme catalyses a ribonucleoside 5'-diphosphate + ATP = a ribonucleoside 5'-triphosphate + ADP. Its function is as follows. Major role in the synthesis of nucleoside triphosphates other than ATP. The ATP gamma phosphate is transferred to the NDP beta phosphate via a ping-pong mechanism, using a phosphorylated active-site intermediate. The polypeptide is Nucleoside diphosphate kinase (Helicobacter pylori (strain ATCC 700392 / 26695) (Campylobacter pylori)).